Here is a 206-residue protein sequence, read N- to C-terminus: Ribonuclease HII (206 aa).

The RNase H type-2 domain occupies 14-206 (EFICGIDEVG…FKLRQLGEKV (193 aa)). A divalent metal cation is bound by residues aspartate 20, glutamate 21, and aspartate 117.

Belongs to the RNase HII family. The cofactor is Mn(2+). Requires Mg(2+) as cofactor.

The protein localises to the cytoplasm. It carries out the reaction Endonucleolytic cleavage to 5'-phosphomonoester.. Endonuclease that specifically degrades the RNA of RNA-DNA hybrids. The sequence is that of Ribonuclease HII from Chlorobium chlorochromatii (strain CaD3).